Here is a 55-residue protein sequence, read N- to C-terminus: Large ribosomal subunit protein bL33 (55 aa).

Belongs to the bacterial ribosomal protein bL33 family.

This chain is Large ribosomal subunit protein bL33, found in Allorhizobium ampelinum (strain ATCC BAA-846 / DSM 112012 / S4) (Agrobacterium vitis (strain S4)).